A 580-amino-acid chain; its full sequence is Tyrosyl-DNA phosphodiesterase 1 (580 aa).

Residues 65–117 (ATNKEQEAHSSSSKPAVTAPVASGSSSSGSLDTNPSGSSASGPAASQDTSNLA) form a disordered region. Residues 87-110 (SGSSSSGSLDTNPSGSSASGPAAS) are compositionally biased toward low complexity. Residue His248 is the Nucleophile of the active site. Residue Lys250 coordinates substrate. Positions 387–390 (SIGS) are interaction with DNA. The Proton donor/acceptor role is filled by His479. Lys481 lines the substrate pocket.

The protein belongs to the tyrosyl-DNA phosphodiesterase family. As to expression, expressed in the body and at higher levels in the head. Expressed in the delaminating neuroblasts and a few ganglion mother cells in stage 11-14 embryonic central nervous system. Weak expression is seen in gonads at stage 16. Expressed in the brain; expression is regulated by DIP2.

It is found in the nucleus. It localises to the cytoplasm. Functionally, DNA repair enzyme that can remove a variety of covalent adducts from DNA through hydrolysis of a 3'-phosphodiester bond, giving rise to DNA with a free 3' phosphate. Catalyzes the hydrolysis of dead-end complexes between DNA and the topoisomerase I active site tyrosine residue. Hydrolyzes 3'-phosphoglycolates on protruding 3' ends on DNA double-strand breaks due to DNA damage by radiation and free radicals. Acts on blunt-ended double-strand DNA breaks and on single-stranded DNA. May have low 3'exonuclease activity and may be able to remove a single nucleoside from the 3'end of DNA and RNA molecules with 3'hydroxyl groups. Has no exonuclease activity towards DNA or RNA with a 3'phosphate. Required for normal polarization of epidermal cells, correct subcellular location of the Crb complex to the apical lateral membrane, and for normal neuronal development during embryonic development. Contributes to maintenance of epithelial cells in response to topoisomerase-1-mediated and oxidative DNA damage. Required for precise axonal bifurcation in mushroom body neurons. Required for maintenance of normal neuronal function. The protein is Tyrosyl-DNA phosphodiesterase 1 of Drosophila melanogaster (Fruit fly).